Reading from the N-terminus, the 443-residue chain is Phosphoglucosamine mutase (443 aa).

Residue Ser-101 is the Phosphoserine intermediate of the active site. Ser-101, Asp-239, Asp-241, and Asp-243 together coordinate Mg(2+). Ser-101 is modified (phosphoserine).

Belongs to the phosphohexose mutase family. It depends on Mg(2+) as a cofactor. In terms of processing, activated by phosphorylation.

The catalysed reaction is alpha-D-glucosamine 1-phosphate = D-glucosamine 6-phosphate. Functionally, catalyzes the conversion of glucosamine-6-phosphate to glucosamine-1-phosphate. The polypeptide is Phosphoglucosamine mutase (Francisella philomiragia subsp. philomiragia (strain ATCC 25017 / CCUG 19701 / FSC 153 / O#319-036)).